Consider the following 237-residue polypeptide: 6-carboxyhexanoate--CoA ligase (237 aa).

It belongs to the BioW family. As to quaternary structure, homodimer. Mg(2+) serves as cofactor.

The catalysed reaction is heptanedioate + ATP + CoA = 6-carboxyhexanoyl-CoA + AMP + diphosphate. It participates in metabolic intermediate metabolism; pimeloyl-CoA biosynthesis; pimeloyl-CoA from pimelate: step 1/1. Catalyzes the transformation of pimelate into pimeloyl-CoA with concomitant hydrolysis of ATP to AMP. The polypeptide is 6-carboxyhexanoate--CoA ligase (Methanocaldococcus jannaschii (strain ATCC 43067 / DSM 2661 / JAL-1 / JCM 10045 / NBRC 100440) (Methanococcus jannaschii)).